Consider the following 142-residue polypeptide: Large ribosomal subunit protein bL17 (142 aa).

The protein belongs to the bacterial ribosomal protein bL17 family. As to quaternary structure, part of the 50S ribosomal subunit. Contacts protein L32.

In Chlamydia pneumoniae (Chlamydophila pneumoniae), this protein is Large ribosomal subunit protein bL17.